We begin with the raw amino-acid sequence, 377 residues long: 3-dehydroquinate synthase (377 aa).

NAD(+) is bound by residues 115–119 (GVIGD), 139–140 (TS), lysine 152, and lysine 161. Positions 194, 256, and 275 each coordinate Zn(2+).

It belongs to the sugar phosphate cyclases superfamily. Dehydroquinate synthase family. NAD(+) is required as a cofactor. The cofactor is Co(2+). Requires Zn(2+) as cofactor.

It localises to the cytoplasm. It carries out the reaction 7-phospho-2-dehydro-3-deoxy-D-arabino-heptonate = 3-dehydroquinate + phosphate. It participates in metabolic intermediate biosynthesis; chorismate biosynthesis; chorismate from D-erythrose 4-phosphate and phosphoenolpyruvate: step 2/7. Catalyzes the conversion of 3-deoxy-D-arabino-heptulosonate 7-phosphate (DAHP) to dehydroquinate (DHQ). The protein is 3-dehydroquinate synthase of Agrobacterium fabrum (strain C58 / ATCC 33970) (Agrobacterium tumefaciens (strain C58)).